We begin with the raw amino-acid sequence, 299 residues long: Endonuclease 4 (299 aa).

Positions Met1 to Cys24 are cleaved as a signal peptide. A divalent metal cation-binding residues include Trp25 and His30. Trp25–His30 lines the substrate pocket. A disulfide bridge connects residues Cys34 and Cys65. A divalent metal cation is bound by residues Asp69 and His84. Substrate contacts are provided by residues Asp69–Trp75, His84–Asp87, and Asn94–Arg99. Intrachain disulfides connect Cys93–Cys246, Cys101–Cys111, and Cys226–Cys233. Substrate-binding residues include Asn118 and Tyr136. Asn118 is a glycosylation site (N-linked (GlcNAc...) asparagine). N-linked (GlcNAc...) asparagine glycosylation is present at Asn137. A divalent metal cation contacts are provided by His147, Asp151, His157, His181, and Asp185. The interval His147–Tyr196 is substrate binding. 3 N-linked (GlcNAc...) asparagine glycosylation sites follow: Asn198, Asn211, and Asn229. Residues Ala284–Ser299 constitute a propeptide, removed in mature form.

Belongs to the nuclease type I family. As to quaternary structure, monomer. Mn(2+) is required as a cofactor. Ca(2+) serves as cofactor.

The catalysed reaction is Endonucleolytic cleavage to 5'-phosphomononucleotide and 5'-phosphooligonucleotide end-products.. Its function is as follows. Endonuclease that can use single-stranded RNA and DNA as substrates. In contradiction with PubMed:23620482, cannot hydrolyze single-stranded DNA and does not cleave mismatches. This is Endonuclease 4 from Arabidopsis thaliana (Mouse-ear cress).